Here is a 240-residue protein sequence, read N- to C-terminus: MAQTSKYKRVVLKLSGEALAGDKGFGINPIIIKSVAQQVAEVAKMDCEIAVIVGGGNIWRGKTGSDLGMDRGTADYMGMLATVMNALALQDSLEQLDCDTRVLTSIEMKQVAEPYIRRRAIRHLEKKRVVIFAAGIGNPYFSTDTTAALRAAEVEADVILMGKNNVDGVYSADPKVDANAIKYEHLTHIQMLQEGLQVMDSTASSFCMDNNIPLNVFSIMEEGNIKRAVMGEKIGTLITK.

An ATP-binding site is contributed by 13–16 (KLSG). The segment at 21–26 (GDKGFG) is involved in allosteric activation by GTP. Gly55 provides a ligand contact to UMP. ATP contacts are provided by Gly56 and Arg60. Residues Asp75 and 136-143 (IGNPYFST) contribute to the UMP site. Residues Asn164, Tyr170, and Asp173 each contribute to the ATP site.

It belongs to the UMP kinase family. In terms of assembly, homohexamer.

It localises to the cytoplasm. It catalyses the reaction UMP + ATP = UDP + ADP. Its pathway is pyrimidine metabolism; CTP biosynthesis via de novo pathway; UDP from UMP (UMPK route): step 1/1. Allosterically activated by GTP. Inhibited by UTP. In terms of biological role, catalyzes the reversible phosphorylation of UMP to UDP. The polypeptide is Uridylate kinase (Staphylococcus epidermidis (strain ATCC 35984 / DSM 28319 / BCRC 17069 / CCUG 31568 / BM 3577 / RP62A)).